The primary structure comprises 193 residues: Protein hunchback (193 aa).

Disordered regions lie at residues 16–126 and 146–193; these read SHHH…ATTT and SNDK…KYMA. The segment covering 17–31 has biased composition (basic residues); that stretch reads HHHHHHHAHHSHHQH. Low complexity-rich tracts occupy residues 35–46 and 56–77; these read SNSNSNASSPHQ and SSNNLQLEQYLKQQQQQQQQQQ. Residues 89 to 99 show a composition bias toward polar residues; that stretch reads PSPSNNDQNSR. The span at 174-193 shows a compositional bias: basic and acidic residues; the sequence is EPEKEHDLMSNSSEDMKYMA.

This sequence belongs to the hunchback C2H2-type zinc-finger protein family.

It is found in the nucleus. Gap class segmentation protein that controls development of head structures. The sequence is that of Protein hunchback (hb) from Drosophila iki (Fruit fly).